We begin with the raw amino-acid sequence, 274 residues long: Pantothenate synthetase (274 aa).

26–33 (MGNLHAGH) is a binding site for ATP. Residue His-33 is the Proton donor of the active site. Gln-57 provides a ligand contact to (R)-pantoate. Gln-57 is a beta-alanine binding site. An ATP-binding site is contributed by 143-146 (GKKD). (R)-pantoate is bound at residue Gln-149. Residues Val-172 and 180 to 183 (LSSR) contribute to the ATP site.

The protein belongs to the pantothenate synthetase family. In terms of assembly, homodimer.

The protein localises to the cytoplasm. It catalyses the reaction (R)-pantoate + beta-alanine + ATP = (R)-pantothenate + AMP + diphosphate + H(+). Its pathway is cofactor biosynthesis; (R)-pantothenate biosynthesis; (R)-pantothenate from (R)-pantoate and beta-alanine: step 1/1. Functionally, catalyzes the condensation of pantoate with beta-alanine in an ATP-dependent reaction via a pantoyl-adenylate intermediate. The chain is Pantothenate synthetase from Dechloromonas aromatica (strain RCB).